The chain runs to 340 residues: GTP 3',8-cyclase (340 aa).

The Radical SAM core domain occupies K8–E227. A GTP-binding site is contributed by R17. [4Fe-4S] cluster-binding residues include C24 and C28. Y30 provides a ligand contact to S-adenosyl-L-methionine. Residue C31 coordinates [4Fe-4S] cluster. R71 is a binding site for GTP. S-adenosyl-L-methionine is bound at residue G75. T102 provides a ligand contact to GTP. S126 is a binding site for S-adenosyl-L-methionine. Residue K163 coordinates GTP. M197 is an S-adenosyl-L-methionine binding site. [4Fe-4S] cluster is bound by residues C261 and C264. R266 to R268 is a GTP binding site. C278 serves as a coordination point for [4Fe-4S] cluster.

Belongs to the radical SAM superfamily. MoaA family. Monomer and homodimer. [4Fe-4S] cluster is required as a cofactor.

The catalysed reaction is GTP + AH2 + S-adenosyl-L-methionine = (8S)-3',8-cyclo-7,8-dihydroguanosine 5'-triphosphate + 5'-deoxyadenosine + L-methionine + A + H(+). The protein operates within cofactor biosynthesis; molybdopterin biosynthesis. Its function is as follows. Catalyzes the cyclization of GTP to (8S)-3',8-cyclo-7,8-dihydroguanosine 5'-triphosphate. The polypeptide is GTP 3',8-cyclase (Staphylococcus saprophyticus subsp. saprophyticus (strain ATCC 15305 / DSM 20229 / NCIMB 8711 / NCTC 7292 / S-41)).